Consider the following 390-residue polypeptide: Protein SOSEKI 4 (390 aa).

Residues 22-115 (RMAEVLYVLS…YALKATKRFD (94 aa)) are DIX-like oligomerization domain. 2 disordered regions span residues 210-247 (KSNS…NRTG) and 291-321 (RESN…SGGS). Polar residues predominate over residues 304-321 (PSVQAETHVSKLSKSGGS).

It belongs to the SOSEKI family. As to quaternary structure, homodimer. Forms long polymer filaments with other SOKs proteins polymers crucial for polar localization and biological activity.

The protein localises to the cell membrane. SOSEKI proteins locally interpret global polarity cues and can influence cell division orientation to coordinate cell polarization relative to body axes. This chain is Protein SOSEKI 4, found in Physcomitrium patens (Spreading-leaved earth moss).